The primary structure comprises 116 residues: Large ribosomal subunit protein bL19 (116 aa).

This sequence belongs to the bacterial ribosomal protein bL19 family.

This protein is located at the 30S-50S ribosomal subunit interface and may play a role in the structure and function of the aminoacyl-tRNA binding site. In Clostridium beijerinckii (strain ATCC 51743 / NCIMB 8052) (Clostridium acetobutylicum), this protein is Large ribosomal subunit protein bL19.